The sequence spans 503 residues: Arabinose import ATP-binding protein AraG 1 (503 aa).

ABC transporter domains lie at 5-240 (LRFD…MVGR) and 251-497 (RALG…LPQT). 37-44 (GENGAGKS) contributes to the ATP binding site.

It belongs to the ABC transporter superfamily. Arabinose importer (TC 3.A.1.2.2) family. As to quaternary structure, the complex is composed of two ATP-binding proteins (AraG), two transmembrane proteins (AraH) and a solute-binding protein (AraF).

The protein localises to the cell inner membrane. The enzyme catalyses L-arabinose(out) + ATP + H2O = L-arabinose(in) + ADP + phosphate + H(+). In terms of biological role, part of the ABC transporter complex AraFGH involved in arabinose import. Responsible for energy coupling to the transport system. In Burkholderia ambifaria (strain ATCC BAA-244 / DSM 16087 / CCUG 44356 / LMG 19182 / AMMD) (Burkholderia cepacia (strain AMMD)), this protein is Arabinose import ATP-binding protein AraG 1.